A 93-amino-acid polypeptide reads, in one-letter code: Aspartyl/glutamyl-tRNA(Asn/Gln) amidotransferase subunit C (93 aa).

The protein belongs to the GatC family. In terms of assembly, heterotrimer of A, B and C subunits.

It carries out the reaction L-glutamyl-tRNA(Gln) + L-glutamine + ATP + H2O = L-glutaminyl-tRNA(Gln) + L-glutamate + ADP + phosphate + H(+). It catalyses the reaction L-aspartyl-tRNA(Asn) + L-glutamine + ATP + H2O = L-asparaginyl-tRNA(Asn) + L-glutamate + ADP + phosphate + 2 H(+). In terms of biological role, allows the formation of correctly charged Asn-tRNA(Asn) or Gln-tRNA(Gln) through the transamidation of misacylated Asp-tRNA(Asn) or Glu-tRNA(Gln) in organisms which lack either or both of asparaginyl-tRNA or glutaminyl-tRNA synthetases. The reaction takes place in the presence of glutamine and ATP through an activated phospho-Asp-tRNA(Asn) or phospho-Glu-tRNA(Gln). This chain is Aspartyl/glutamyl-tRNA(Asn/Gln) amidotransferase subunit C, found in Helicobacter pylori (strain HPAG1).